The sequence spans 161 residues: UPF0225 protein GSU1048 (161 aa).

This sequence belongs to the UPF0225 family.

In Geobacter sulfurreducens (strain ATCC 51573 / DSM 12127 / PCA), this protein is UPF0225 protein GSU1048.